Consider the following 254-residue polypeptide: Small ribosomal subunit protein uS2 (254 aa).

It belongs to the universal ribosomal protein uS2 family.

In Brucella ovis (strain ATCC 25840 / 63/290 / NCTC 10512), this protein is Small ribosomal subunit protein uS2.